The sequence spans 515 residues: Putative ribose/galactose/methyl galactoside import ATP-binding protein (515 aa).

2 ABC transporter domains span residues 25-261 (LEVL…VGRE) and 268-515 (LREK…SGLN). ATP is bound at residue 57–64 (GENGAGKS).

It belongs to the ABC transporter superfamily. Carbohydrate importer 2 (CUT2) (TC 3.A.1.2) family.

The protein resides in the cell inner membrane. The enzyme catalyses D-ribose(out) + ATP + H2O = D-ribose(in) + ADP + phosphate + H(+). It carries out the reaction D-galactose(out) + ATP + H2O = D-galactose(in) + ADP + phosphate + H(+). In terms of biological role, part of an ABC transporter complex involved in carbohydrate import. Could be involved in ribose, galactose and/or methyl galactoside import. Responsible for energy coupling to the transport system. The sequence is that of Putative ribose/galactose/methyl galactoside import ATP-binding protein from Pseudomonas fluorescens (strain ATCC BAA-477 / NRRL B-23932 / Pf-5).